Here is a 644-residue protein sequence, read N- to C-terminus: Exoribonuclease 2 (644 aa).

Positions 189 to 516 (REDLTALDFV…NHRLLKAVIK (328 aa)) constitute an RNB domain. The 83-residue stretch at 561 to 643 (DTRFAAEIVD…ETRSIIARPV (83 aa)) folds into the S1 motif domain.

The protein belongs to the RNR ribonuclease family. RNase II subfamily.

Its subcellular location is the cytoplasm. The enzyme catalyses Exonucleolytic cleavage in the 3'- to 5'-direction to yield nucleoside 5'-phosphates.. Involved in mRNA degradation. Hydrolyzes single-stranded polyribonucleotides processively in the 3' to 5' direction. In Escherichia coli (strain ATCC 8739 / DSM 1576 / NBRC 3972 / NCIMB 8545 / WDCM 00012 / Crooks), this protein is Exoribonuclease 2.